The primary structure comprises 275 residues: WIMGHMVNAIYQIDEFVDLGANAIETDVEFSSSGKAKYTYHGVPCDCFRWCKKWENIDGFLEALRRATTPGDSKYRKELILVVLDLKLDYVYLSDAYDAGKDLAQRLVKHYWNGGRNGGRAYILLSVPVVEYYRLITGFRAHLMNEGYKDLLAKVGYDFSEDTYLSTIHDGFRNAGVRDKDHIWQSDGISNCFARTLTRLKEAVSNRDSTDGYSNKVYYWTVDKETSITDAINAGADGIMTNHPDRVINVLKDDEIKKKFRLARYRDNPWKTFRK.

The active site involves His-5. Residues Glu-25 and Asp-27 each contribute to the Mg(2+) site. His-41 serves as the catalytic Nucleophile. 2 disulfides stabilise this stretch: Cys-45–Cys-51 and Cys-47–Cys-192. Asp-85 serves as a coordination point for Mg(2+).

Belongs to the arthropod phospholipase D family. Class II subfamily. It depends on Mg(2+) as a cofactor. As to expression, expressed by the venom gland.

Its subcellular location is the secreted. It catalyses the reaction an N-(acyl)-sphingosylphosphocholine = an N-(acyl)-sphingosyl-1,3-cyclic phosphate + choline. The catalysed reaction is an N-(acyl)-sphingosylphosphoethanolamine = an N-(acyl)-sphingosyl-1,3-cyclic phosphate + ethanolamine. It carries out the reaction a 1-acyl-sn-glycero-3-phosphocholine = a 1-acyl-sn-glycero-2,3-cyclic phosphate + choline. The enzyme catalyses a 1-acyl-sn-glycero-3-phosphoethanolamine = a 1-acyl-sn-glycero-2,3-cyclic phosphate + ethanolamine. In terms of biological role, dermonecrotic toxins cleave the phosphodiester linkage between the phosphate and headgroup of certain phospholipids (sphingolipid and lysolipid substrates), forming an alcohol (often choline) and a cyclic phosphate. This toxin acts on sphingomyelin (SM). It may also act on ceramide phosphoethanolamine (CPE), lysophosphatidylcholine (LPC) and lysophosphatidylethanolamine (LPE), but not on lysophosphatidylserine (LPS), and lysophosphatidylglycerol (LPG). It acts by transphosphatidylation, releasing exclusively cyclic phosphate products as second products. Induces dermonecrosis, hemolysis, increased vascular permeability, edema, inflammatory response, and platelet aggregation. This chain is Dermonecrotic toxin LhSicTox-alphaVI1ii, found in Loxosceles hirsuta (Recluse spider).